Consider the following 78-residue polypeptide: Small ribosomal subunit protein bS16c (78 aa).

Belongs to the bacterial ribosomal protein bS16 family.

The protein resides in the plastid. The protein localises to the chloroplast. This is Small ribosomal subunit protein bS16c from Phaeodactylum tricornutum (strain CCAP 1055/1).